A 660-amino-acid polypeptide reads, in one-letter code: MVEHYHSTYYYEIAINIPLNKLFFYKFNLNLEIGIRVMVNFNGSNKIGIIIKKYFENEFKEKFEFKIKEIIKIIDTTKIITEHNIDLAHWISKKTFSGFGETLFFGLPQNSKAKKNQTLPSINEHPDHKKCLELNNEQQNIYKEIIGSEKTNVFYLFGIPGSGKTEIFIKLCEYYLALEQQVLFLIPEISLGYQIIKRIKYALNMHHKIYEYNSKVPNSDKNLIWNKVKNGESLVVIGIKSVLMLPFTKLKLIIMDEEHETTYKSENIPRFHSRHISFFLQKKFNAKFVMGSATPSLEAYHAMKNNQIKKIIMQNKFSQSKIEDIKIINMKKEPSTISSELLYSIQKSLNEKRQSLIFINKRGYLKNLECNECGHIICCPNCSFGLIYHKKENKLLCHYCSYKTKTASHCPQCESKDIKYKTYGIQLVEKELKKFLPNAKIARIDSDITKIENIDSINKFENKEIDILIGTQIIAKGFNFENIKTLGIINADIGMGLPDFRSGERIFTTLSQIMGRAARFKDDNIIIIQTKNPNYYAIKYAYKNQYEQFYEEELDIRKKLNYPPFNKIIRIIFRSKNEESAKQKCWEFFEKSKEFLQEEIEHLGPSEAIMKKISKNYRYNIIYLSKSYSLLEKLVNKTKEKVKMTSTVYIEIDYYPISLI.

The Helicase ATP-binding domain occupies 145 to 313; it reads IIGSEKTNVF…KNNQIKKIIM (169 aa). 158–165 contacts ATP; the sequence is GIPGSGKT. Positions 256–259 match the DEAH box motif; sequence DEEH. Residues Cys-370, Cys-373, Cys-379, Cys-382, Cys-397, Cys-400, Cys-410, and Cys-413 each contribute to the Zn(2+) site. Residues 405–557 enclose the Helicase C-terminal domain; the sequence is KTASHCPQCE…QFYEEELDIR (153 aa).

Belongs to the helicase family. PriA subfamily. In terms of assembly, component of the replication restart primosome. It depends on Zn(2+) as a cofactor.

The catalysed reaction is Couples ATP hydrolysis with the unwinding of duplex DNA by translocating in the 3'-5' direction.. It catalyses the reaction ATP + H2O = ADP + phosphate + H(+). Initiates the restart of stalled replication forks, which reloads the replicative helicase on sites other than the origin of replication. Recognizes and binds to abandoned replication forks and remodels them to uncover a helicase loading site. Promotes assembly of the primosome at these replication forks. The polypeptide is Replication restart protein PriA (Borreliella burgdorferi (strain ATCC 35210 / DSM 4680 / CIP 102532 / B31) (Borrelia burgdorferi)).